The sequence spans 361 residues: U7 snRNA-associated Sm-like protein LSm11 (361 aa).

The disordered stretch occupies residues 1–26 (MEEREWGARSARAGSPASPPSPRLDV). A phosphoserine mark is found at serine 15 and serine 21. Arginine 41 carries the post-translational modification Omega-N-methylarginine. Positions 67-142 (RTGRGRARGT…QGPGRSKKAP (76 aa)) are disordered. Over residues 76–96 (TGEPASAGTSTGTSTGAGSSS) the composition is skewed to low complexity. Lysine 121 is covalently cross-linked (Glycyl lysine isopeptide (Lys-Gly) (interchain with G-Cter in SUMO2)). Serine 155 carries the phosphoserine modification. The Sm domain occupies 155-230 (SPLGELHRCI…LTLTRLFDRL (76 aa)). Residues 172–205 (VHIRTFKGLRGVCTGFLVAFDKFWNMALTDVDET) are SM 1. The tract at residues 268–335 (RGDTDRSSHR…RKKKRKPKVD (68 aa)) is disordered. Phosphoserine is present on serine 281. A compositionally biased stretch (polar residues) spans 307-323 (GSSVGGTFSRATTLSRG). The tract at residues 344-357 (INQIFIRGENVLLV) is SM 2.

It belongs to the snRNP Sm proteins family. Component of the heptameric ring U7 snRNP complex, or U7 Sm protein core complex, at least composed of LSM10, LSM11, SNRPB, SNRPD3, SNRPE, SNRPF, SNRPG and U7 snRNA. Formation of the U7 snRNP is an ATP-dependent process mediated by a specialized SMN complex containing at least the Sm protein core complex and additionally, the U7-specific LSM10 and LSM11 proteins. Identified in a histone pre-mRNA complex, at least composed of ERI1, LSM11, SLBP, SNRPB, SYNCRIP and YBX1. Interacts (via the Sm domains) with CLNS1A. Interacts with PRMT5, SMN, ZNF473 and WDR77. In terms of processing, not methylated.

The protein localises to the nucleus. Component of the U7 snRNP complex that is involved in the histone 3'-end pre-mRNA processing. Increases U7 snRNA levels but not histone 3'-end pre-mRNA processing activity, when overexpressed. Required for cell cycle progression from G1 to S phases. Binds specifically to the Sm-binding site of U7 snRNA. This is U7 snRNA-associated Sm-like protein LSm11 from Mus musculus (Mouse).